The chain runs to 306 residues: MAVARLAAVAAWVPCRSWGWAAVPFGPHRGLSVLLARIPQRAPRWLPACRQKTSLSFLNRPDLPNLAYKKLKGKSPGIIFIPGYLSYMNGTKALAIEEFCKSLGHACIRFDYSGVGSSDGNSEESTLGKWRKDVLSIIDDLADGPQILVGSSLGGWLMLHAAIARPEKVVALIGVATAADTLVTKFNQLPVELKKEVEMKGVWSMPSKYSEEGVYNVQYSFIKEAEHHCLLHSPIPVNCPIRLLHGMKDDIVPWHTSMQVADRVLSTDVDVILRKHSDHRMREKADIQLLVYTIDDLIDKLSTIVN.

The N-terminal 52 residues, 1 to 52 (MAVARLAAVAAWVPCRSWGWAAVPFGPHRGLSVLLARIPQRAPRWLPACRQK), are a transit peptide targeting the mitochondrion. An AB hydrolase-1 domain is found at 78-178 (IIFIPGYLSY…VVALIGVATA (101 aa)). Active-site charge relay system residues include Ser152, Asp249, and His279.

This sequence belongs to the AB hydrolase superfamily.

It localises to the mitochondrion. It carries out the reaction S-hexadecanoyl-L-cysteinyl-[protein] + H2O = L-cysteinyl-[protein] + hexadecanoate + H(+). The enzyme catalyses mycophenolic acid O-acyl-beta-D-glucuronide + H2O = mycophenolate + D-glucuronate + H(+). With respect to regulation, inhibited by palmostatin-B. Functionally, acts as an acyl-protein thioesterase that hydrolyzes fatty acids from acylated residues in proteins. Regulates the mitochondrial S-depalmitoylation of the nucleophilic active site residue of peroxiredoxin-5/PRDX5, a key antioxidant protein, therefore modulating mitochondrial antioxidant ability. Also catalyzes the deglucuronidation of mycophenolic acid acyl-glucuronide, an active metabolite of the immunosuppressant drug mycophenolate. This Homo sapiens (Human) protein is Palmitoyl-protein thioesterase ABHD10, mitochondrial.